Here is a 325-residue protein sequence, read N- to C-terminus: MNALTAVQNNAVDSGQDYSGFTLIPSAQSPRLLELTFTEQTTKQFLEQVAEWPVQALEYKSFLRFRVGKILDDLCANQLQPLLLKTLLNRAEGALLINAVGVDDVKQADEMVKLATAVAHLIGRSNFDAMSGQYYARFVVKNVDNSDSYLRQPHRVMELHNDGTYVEEITDYVLMMKIDEQNMQGGNSLLLHLDDWEHLDHYFRHPLARRPMRFAAPPSKNVSKDVFHPVFDVDQQGRPVMRYIDQFVQPKDFEEGVWLSELSDAIETSKGILSVPVPVGKFLLINNLFWLHGRDRFTPHPDLRRELMRQRGYFAYATHHYQTHQ.

Residues His160, Asp162, and His292 each coordinate Fe cation.

It belongs to the glutarate hydroxylase family. In terms of assembly, homotetramer. Fe(2+) is required as a cofactor.

It catalyses the reaction glutarate + 2-oxoglutarate + O2 = (S)-2-hydroxyglutarate + succinate + CO2. Its pathway is amino-acid degradation. In terms of biological role, acts as an alpha-ketoglutarate-dependent dioxygenase catalyzing hydroxylation of glutarate (GA) to L-2-hydroxyglutarate (L2HG). Functions in a L-lysine degradation pathway that proceeds via cadaverine, glutarate and L-2-hydroxyglutarate. This Escherichia coli O17:K52:H18 (strain UMN026 / ExPEC) protein is Glutarate 2-hydroxylase.